The following is a 201-amino-acid chain: Ras-related protein Rab-9A (201 aa).

Ala2 carries the N-acetylalanine modification. GTP-binding residues include Gly17, Val18, Gly19, Lys20, Ser21, Ser22, Asp33, Ser34, His38, and Thr39. Ser21 serves as a coordination point for Mg(2+). A Switch 1 motif is present at residues Lys31–Val42. Residue Ser34 is modified to Phosphoserine. Residues Thr39 and Asp62 each coordinate Mg(2+). The short motif at Ala64–Arg78 is the Switch 2 element. GTP is bound by residues Gly65, Asn124, Lys125, Asp127, Ala155, and Lys156. Ser179 is subject to Phosphoserine. The residue at position 187 (Thr187) is a Phosphothreonine. 2 S-geranylgeranyl cysteine lipidation sites follow: Cys200 and Cys201.

It belongs to the small GTPase superfamily. Rab family. As to quaternary structure, interacts (preferentially in its GTP-bound form) with GCC2 (via its GRIP domain). Interacts (GTP-bound form) with SGSM1; the GDP-bound form has much lower affinity for SGSM1. Interacts with SGSM2. The GTP-bound form but not the GDP-bound form interacts with HPS4. The GTP-bound form but not the GDP-bound form interacts with BLOC-3 complex (heterodimer of HPS1 and HPS4) but does not interact with HPS1 alone. Interacts (GTP-bound form) with NDE1; two RAB9A-GTP molecules lie on the opposite sides of the NDE1 homodimer; the interaction leads to RAB9A-dynein motor tethering. Interacts (GTP-bound form) with NDEL1. Requires Mg(2+) as cofactor.

The protein localises to the cell membrane. It is found in the endoplasmic reticulum membrane. It localises to the golgi apparatus membrane. Its subcellular location is the late endosome. The protein resides in the cytoplasmic vesicle. The protein localises to the phagosome membrane. It is found in the phagosome. It localises to the cytoplasmic vesicle membrane. Its subcellular location is the melanosome. The enzyme catalyses GTP + H2O = GDP + phosphate + H(+). Regulated by guanine nucleotide exchange factors (GEFs) which promote the exchange of bound GDP for free GTP. Regulated by GTPase activating proteins (GAPs) which increase the GTP hydrolysis activity. Inhibited by GDP dissociation inhibitors (GDIs). The small GTPases Rab are key regulators of intracellular membrane trafficking, from the formation of transport vesicles to their fusion with membranes. Rabs cycle between an inactive GDP-bound form and an active GTP-bound form that is able to recruit to membranes different sets of downstream effectors directly responsible for vesicle formation, movement, tethering and fusion. RAB9A is involved in the transport of proteins between the endosomes and the trans-Golgi network (TGN). Specifically uses NDE1/NDEL1 as an effector to interact with the dynein motor complex in order to control retrograde trafficking of RAB9-associated late endosomes to the TGN. Involved in the recruitment of SGSM2 to melanosomes and is required for the proper trafficking of melanogenic enzymes TYR, TYRP1 and DCT/TYRP2 to melanosomes in melanocytes. The chain is Ras-related protein Rab-9A from Mus musculus (Mouse).